The chain runs to 494 residues: 4-trimethylaminobutyraldehyde dehydrogenase (494 aa).

Ser2 carries the post-translational modification N-acetylserine; in 4-trimethylaminobutyraldehyde dehydrogenase, N-terminally processed. Lys30 carries the N6-acetyllysine; alternate modification. At Lys30 the chain carries N6-succinyllysine; alternate. An N6-succinyllysine modification is found at Lys59. NAD(+) is bound by residues Lys180 and 232 to 236 (GSVPT). Glu254 acts as the Proton acceptor in catalysis. Cys288 functions as the Nucleophile in the catalytic mechanism. An N6-acetyllysine modification is found at Lys298. N6-acetyllysine; alternate is present on Lys303. N6-succinyllysine; alternate is present on Lys303. Lys344 is modified (N6-acetyllysine). Glu391 provides a ligand contact to NAD(+).

The protein belongs to the aldehyde dehydrogenase family. In terms of assembly, homotetramer. Detected in brain (at protein level). High expression in adult liver, skeletal muscle, and kidney. Low levels in heart, pancreas, lung and brain. Expressed in all regions of the brain. Expression levels are variable in the different brain areas, with the highest levels in the spinal cord and the lowest in the occipital pole.

The protein resides in the cytoplasm. It is found in the cytosol. It catalyses the reaction 4-(trimethylamino)butanal + NAD(+) + H2O = 4-(trimethylamino)butanoate + NADH + 2 H(+). The enzyme catalyses an aldehyde + NAD(+) + H2O = a carboxylate + NADH + 2 H(+). It carries out the reaction 4-aminobutanal + NAD(+) + H2O = 4-aminobutanoate + NADH + 2 H(+). The catalysed reaction is formaldehyde + NAD(+) + H2O = formate + NADH + 2 H(+). It catalyses the reaction acetaldehyde + NAD(+) + H2O = acetate + NADH + 2 H(+). The enzyme catalyses imidazole-4-acetaldehyde + NAD(+) + H2O = imidazole-4-acetate + NADH + 2 H(+). It carries out the reaction acrolein + NAD(+) + H2O = acrylate + NADH + 2 H(+). The catalysed reaction is (5-hydroxyindol-3-yl)acetaldehyde + NAD(+) + H2O = (5-hydroxyindol-3-yl)acetate + NADH + 2 H(+). It catalyses the reaction 3,4-dihydroxyphenylacetaldehyde + NAD(+) + H2O = 3,4-dihydroxyphenylacetate + NADH + 2 H(+). The enzyme catalyses spermine monoaldehyde + NAD(+) + H2O = N-(2-carboxyethyl)spermidine + NADH + 2 H(+). It carries out the reaction propanal + NAD(+) + H2O = propanoate + NADH + 2 H(+). The catalysed reaction is butanal + NAD(+) + H2O = butanoate + NADH + 2 H(+). It catalyses the reaction pentanal + NAD(+) + H2O = pentanoate + NADH + 2 H(+). The enzyme catalyses hexanal + NAD(+) + H2O = hexanoate + NADH + 2 H(+). The protein operates within amine and polyamine biosynthesis; carnitine biosynthesis. Its function is as follows. Converts gamma-trimethylaminobutyraldehyde into gamma-butyrobetaine with high efficiency (in vitro). Can catalyze the irreversible oxidation of a broad range of aldehydes to the corresponding acids in an NAD-dependent reaction, but with low efficiency. Catalyzes the oxidation of aldehydes arising from biogenic amines and polyamines. The chain is 4-trimethylaminobutyraldehyde dehydrogenase (ALDH9A1) from Homo sapiens (Human).